The primary structure comprises 338 residues: Uroporphyrinogen decarboxylase (338 aa).

Substrate is bound by residues 27-31 (RQAGR), aspartate 77, tyrosine 151, serine 203, and histidine 317.

The protein belongs to the uroporphyrinogen decarboxylase family. As to quaternary structure, homodimer.

The protein resides in the cytoplasm. The enzyme catalyses uroporphyrinogen III + 4 H(+) = coproporphyrinogen III + 4 CO2. Its pathway is porphyrin-containing compound metabolism; protoporphyrin-IX biosynthesis; coproporphyrinogen-III from 5-aminolevulinate: step 4/4. In terms of biological role, catalyzes the decarboxylation of four acetate groups of uroporphyrinogen-III to yield coproporphyrinogen-III. The sequence is that of Uroporphyrinogen decarboxylase from Wolbachia sp. subsp. Drosophila simulans (strain wRi).